Here is a 508-residue protein sequence, read N- to C-terminus: MGSANNEYEFLSEIGLTSHNLGSYVAGKWQANGPLVSTLNPANNQPIAQVVEASLEDYEQGLKACEEAAKIWMQVTAPKRGDIVRQIGDALRSKLDYLGRLLSLEMGKILAEGIGEVQEVIDMCDFAVGLSRQLNGSVIPSERPNHMMLEMWNPLGIVGVITAFNFPCAVLGWNACIALVCGNCVVWKGAPTTPLITIAMTKLVAEVLEKNNLPGAIFTAMCGGAEIGEAIAKDTRIPLVSFTGSSRVGSMVQQTVNARSGKTLLELSGNNAIIVMDDADIQLAARSVLFAAVGTAGQRCTTCRRLLLHESVYDKVLEQLLTSYKQVKIGNPLEKGTLLGPLHTPESKKNFEKGIEVIKSQGGKILTGGKAVEGEGNFVEPTIIEISADAAVVKEELFAPVLYVLKFKSFGEAVAINNSVPQGLSSSIFTRNPENIFRWIGPLGSDCGIVNVNIPTNGAEIGGAFGGEKATGGGREAGSDSWKQYMRRSTCTINYGNELPLAQGINFG.

244-249 (GSSRVG) contributes to the NAD(+) binding site. The Proton acceptor role is filled by Glu266. Residue Cys300 is the Nucleophile of the active site.

It belongs to the aldehyde dehydrogenase family. In terms of assembly, homotetramer.

The catalysed reaction is an aldehyde + NAD(+) + H2O = a carboxylate + NADH + 2 H(+). This Arabidopsis thaliana (Mouse-ear cress) protein is Aldehyde dehydrogenase family 7 member B4 (ALDH7B4).